Here is a 426-residue protein sequence, read N- to C-terminus: Glutamate-1-semialdehyde 2,1-aminomutase (426 aa).

Lys265 is subject to N6-(pyridoxal phosphate)lysine.

It belongs to the class-III pyridoxal-phosphate-dependent aminotransferase family. HemL subfamily. Homodimer. It depends on pyridoxal 5'-phosphate as a cofactor.

The protein localises to the cytoplasm. The catalysed reaction is (S)-4-amino-5-oxopentanoate = 5-aminolevulinate. It participates in porphyrin-containing compound metabolism; protoporphyrin-IX biosynthesis; 5-aminolevulinate from L-glutamyl-tRNA(Glu): step 2/2. The polypeptide is Glutamate-1-semialdehyde 2,1-aminomutase (Pectobacterium carotovorum subsp. carotovorum (strain PC1)).